A 214-amino-acid polypeptide reads, in one-letter code: Hypoxanthine-guanine phosphoribosyltransferase (214 aa).

N-acetylalanine is present on Ala2. Lys69 is a binding site for GMP. An N6-acetyllysine modification is found at Lys103. A Glycyl lysine isopeptide (Lys-Gly) (interchain with G-Cter in SUMO1); alternate cross-link involves residue Lys115. Lys115 participates in a covalent cross-link: Glycyl lysine isopeptide (Lys-Gly) (interchain with G-Cter in SUMO2); alternate. GMP-binding positions include 134–142 (EDIIDTGKT), Lys166, 186–188 (KFV), and Asp194. The Proton acceptor role is filled by Asp138. Thr142 is modified (phosphothreonine). Mg(2+) is bound at residue Asp194.

It belongs to the purine/pyrimidine phosphoribosyltransferase family. Homotetramer. Requires Mg(2+) as cofactor.

It is found in the cytoplasm. It catalyses the reaction IMP + diphosphate = hypoxanthine + 5-phospho-alpha-D-ribose 1-diphosphate. It carries out the reaction GMP + diphosphate = guanine + 5-phospho-alpha-D-ribose 1-diphosphate. It functions in the pathway purine metabolism; IMP biosynthesis via salvage pathway; IMP from hypoxanthine: step 1/1. Converts guanine to guanosine monophosphate, and hypoxanthine to inosine monophosphate. Transfers the 5-phosphoribosyl group from 5-phosphoribosylpyrophosphate onto the purine. Plays a central role in the generation of purine nucleotides through the purine salvage pathway. The protein is Hypoxanthine-guanine phosphoribosyltransferase (Hprt1) of Mus spretus (Western Mediterranean mouse).